The chain runs to 63 residues: Protein DsrB (63 aa).

This sequence belongs to the DsrB family.

The protein is Protein DsrB of Yersinia pseudotuberculosis serotype O:3 (strain YPIII).